Reading from the N-terminus, the 298-residue chain is MSVHVLSVEVSVIKQFYALTKPRVIQLIVFCALIGMVLAVPGLPTWAELQLALLACLGIWLVAGAAAAFNCVVEKSIDAKMKRTAWRPTARGELADWQTLLFSAVLCAAGSILLYFWVNPLTMWLTFATFIGYAVVYTVILKPLTPQNIVIGGASGAMPPVLGWAAMAGDVGPEALILFLIIFLWTPPHFWALALYRVEDYRKSGLPMLPVTHGNEFTRLMVLLYTFILFAACLMPYVYGMSSWLYLIAAVVLNLGFCLYAFYLWRDYSDLLARKTFRFSLIHLSLLFAALLLDHYLL.

The next 9 helical transmembrane spans lie at 24–44 (VIQLIVFCALIGMVLAVPGLP), 49–69 (LQLALLACLGIWLVAGAAAAF), 100–120 (LLFSAVLCAAGSILLYFWVNP), 121–141 (LTMWLTFATFIGYAVVYTVIL), 149–169 (IVIGGASGAMPPVLGWAAMAG), 175–195 (ALILFLIIFLWTPPHFWALAL), 220–240 (LMVLLYTFILFAACLMPYVYG), 244–264 (WLYLIAAVVLNLGFCLYAFYL), and 277–297 (FRFSLIHLSLLFAALLLDHYL).

The protein belongs to the UbiA prenyltransferase family. Protoheme IX farnesyltransferase subfamily.

It is found in the cell inner membrane. It carries out the reaction heme b + (2E,6E)-farnesyl diphosphate + H2O = Fe(II)-heme o + diphosphate. It participates in porphyrin-containing compound metabolism; heme O biosynthesis; heme O from protoheme: step 1/1. Its function is as follows. Converts heme B (protoheme IX) to heme O by substitution of the vinyl group on carbon 2 of heme B porphyrin ring with a hydroxyethyl farnesyl side group. This is Protoheme IX farnesyltransferase from Albidiferax ferrireducens (strain ATCC BAA-621 / DSM 15236 / T118) (Rhodoferax ferrireducens).